The following is a 436-amino-acid chain: GTPase Der (436 aa).

2 EngA-type G domains span residues 3 to 168 (PLIA…PESD) and 177 to 352 (IRLA…QNRS). Residues 9–16 (GRPNVGKS), 56–60 (DTGGY), 120–123 (NKAE), 183–190 (GRPNVGKS), 230–234 (DTAGL), and 295–298 (NKWD) contribute to the GTP site. A KH-like domain is found at 353–436 (RKISTSALNR…VTISLRFMQK (84 aa)).

Belongs to the TRAFAC class TrmE-Era-EngA-EngB-Septin-like GTPase superfamily. EngA (Der) GTPase family. Associates with the 50S ribosomal subunit.

GTPase that plays an essential role in the late steps of ribosome biogenesis. In Chlorobium luteolum (strain DSM 273 / BCRC 81028 / 2530) (Pelodictyon luteolum), this protein is GTPase Der.